A 494-amino-acid chain; its full sequence is Alpha-amylase-related protein (494 aa).

An N-terminal signal peptide occupies residues 1 to 20; the sequence is MFKFTFALALCVLAAGLVLA. Position 21 is a pyrrolidone carboxylic acid (glutamine 21). The cysteines at positions 48 and 104 are disulfide-linked. Asparagine 118, glutamine 169, and aspartate 178 together coordinate Ca(2+). Cysteines 157 and 171 form a disulfide. Arginine 206 is a chloride binding site. The Nucleophile role is filled by aspartate 208. Histidine 212 is a Ca(2+) binding site. Glutamate 245 serves as the catalytic Proton donor. Chloride-binding residues include asparagine 308 and arginine 343. 3 disulfides stabilise this stretch: cysteine 376–cysteine 382, cysteine 418–cysteine 441, and cysteine 448–cysteine 460.

It belongs to the glycosyl hydrolase 13 family. In terms of assembly, monomer. Requires Ca(2+) as cofactor. Chloride is required as a cofactor.

The protein resides in the secreted. It catalyses the reaction Endohydrolysis of (1-&gt;4)-alpha-D-glucosidic linkages in polysaccharides containing three or more (1-&gt;4)-alpha-linked D-glucose units.. This Drosophila pseudoobscura pseudoobscura (Fruit fly) protein is Alpha-amylase-related protein (Amyrel).